The sequence spans 242 residues: Potassium/proton antiporter CemA (242 aa).

The next 2 membrane-spanning stretches (helical) occupy residues 116–136 (IIFCLSTNIISFTILSGYSIL) and 200–220 (ISGFVSTFPVFLDTFFKYLIF).

This sequence belongs to the CemA family.

It is found in the plastid. The protein localises to the chloroplast inner membrane. It carries out the reaction K(+)(in) + H(+)(out) = K(+)(out) + H(+)(in). Contributes to K(+)/H(+) antiport activity by supporting proton efflux to control proton extrusion and homeostasis in chloroplasts in a light-dependent manner to modulate photosynthesis. Prevents excessive induction of non-photochemical quenching (NPQ) under continuous-light conditions. Indirectly promotes efficient inorganic carbon uptake into chloroplasts. This Chloranthus spicatus (Chulantree) protein is Potassium/proton antiporter CemA.